A 226-amino-acid polypeptide reads, in one-letter code: Leucyl/phenylalanyl-tRNA--protein transferase (226 aa).

It belongs to the L/F-transferase family.

Its subcellular location is the cytoplasm. The enzyme catalyses N-terminal L-lysyl-[protein] + L-leucyl-tRNA(Leu) = N-terminal L-leucyl-L-lysyl-[protein] + tRNA(Leu) + H(+). It catalyses the reaction N-terminal L-arginyl-[protein] + L-leucyl-tRNA(Leu) = N-terminal L-leucyl-L-arginyl-[protein] + tRNA(Leu) + H(+). It carries out the reaction L-phenylalanyl-tRNA(Phe) + an N-terminal L-alpha-aminoacyl-[protein] = an N-terminal L-phenylalanyl-L-alpha-aminoacyl-[protein] + tRNA(Phe). Functions in the N-end rule pathway of protein degradation where it conjugates Leu, Phe and, less efficiently, Met from aminoacyl-tRNAs to the N-termini of proteins containing an N-terminal arginine or lysine. In Pseudomonas fluorescens (strain ATCC BAA-477 / NRRL B-23932 / Pf-5), this protein is Leucyl/phenylalanyl-tRNA--protein transferase.